A 68-amino-acid polypeptide reads, in one-letter code: Metallothionein (68 aa).

The a divalent metal cation site is built by Cys7, Cys9, Cys14, Cys16, Cys20, Cys22, Cys25, Cys27, Cys35, Cys39, Cys40, Cys42, Cys43, Cys47, Cys50, Cys54, Cys56, Cys64, Cys66, and Cys67.

This sequence belongs to the metallothionein superfamily. Type 1 family.

Its function is as follows. Metallothioneins have a high content of cysteine residues that bind various heavy metals. In Scyliorhinus torazame (Cloudy catshark), this protein is Metallothionein (mt).